We begin with the raw amino-acid sequence, 860 residues long: Pentatricopeptide repeat-containing protein At1g18900 (860 aa).

8 PPR repeats span residues 363–397 (DGHT…GCQP), 398–432 (NTVT…GCKP), 433–467 (DRVT…GLSP), 468–502 (DTFT…GCTP), 503–537 (NLVT…GFEP), 538–572 (DKVT…NWIP), 573–607 (DEPV…GLRP), and 608–642 (NVPT…GLRP). Residues 760 to 843 (INLHVMSEGT…NSGCFVGSGE (84 aa)) form the Smr domain.

This sequence belongs to the PPR family. P subfamily.

In Arabidopsis thaliana (Mouse-ear cress), this protein is Pentatricopeptide repeat-containing protein At1g18900.